We begin with the raw amino-acid sequence, 688 residues long: Acyl-CoA synthetase short-chain family member B, mitochondrial (688 aa).

It belongs to the ATP-dependent AMP-binding enzyme family.

The protein resides in the mitochondrion. It catalyses the reaction acetate + ATP + CoA = acetyl-CoA + AMP + diphosphate. In terms of biological role, activates acetate so that it can be used for lipid synthesis or for energy generation. The chain is Acyl-CoA synthetase short-chain family member B, mitochondrial (aslB) from Dictyostelium discoideum (Social amoeba).